Consider the following 220-residue polypeptide: uncharacterized protein (220 aa).

The next 4 membrane-spanning stretches (helical) occupy residues L61–G81, S85–F105, F115–L135, and L150–L170.

It localises to the membrane. This is an uncharacterized protein from Caenorhabditis elegans.